Reading from the N-terminus, the 306-residue chain is Peroxisomal protein PEX21 (306 aa).

A Glycyl cysteine thioester (Cys-Gly) (interchain with G-Cter in ubiquitin) cross-link involves residue Cys-4. Residues 172–203 (ERQVQDDEKEQQQDKDDDFHLKETSPLDEDQR) form a disordered region.

This sequence belongs to the peroxin-21 family. In terms of assembly, interacts with PEX7. In terms of processing, monoubiquitinated at Cys-4; acts as a signal for PEX21 extraction and is required for proper export from peroxisomes and recycling.

The protein resides in the cytoplasm. Its subcellular location is the cytosol. The protein localises to the peroxisome. Its function is as follows. Mediates peroxisomal import of proteins containing a C-terminal PTS2-type peroxisomal targeting signal via its interaction with PEX7. Interaction with PEX7 only takes place when PEX7 is associated with cargo proteins containing a PTS2 peroxisomal targeting signal. PEX7 along with PTS2-containing cargo proteins are then translocated through the PEX13-PEX14 docking complex together with PEX21. The protein is Peroxisomal protein PEX21 (PEX21) of Kluyveromyces lactis (strain ATCC 8585 / CBS 2359 / DSM 70799 / NBRC 1267 / NRRL Y-1140 / WM37) (Yeast).